A 356-amino-acid polypeptide reads, in one-letter code: Peptide chain release factor 1 (356 aa).

Residue Q233 is modified to N5-methylglutamine.

Belongs to the prokaryotic/mitochondrial release factor family. In terms of processing, methylated by PrmC. Methylation increases the termination efficiency of RF1.

The protein resides in the cytoplasm. Functionally, peptide chain release factor 1 directs the termination of translation in response to the peptide chain termination codons UAG and UAA. The protein is Peptide chain release factor 1 of Symbiobacterium thermophilum (strain DSM 24528 / JCM 14929 / IAM 14863 / T).